Reading from the N-terminus, the 400-residue chain is Tyrosine--tRNA ligase (400 aa).

The 'HIGH' region motif lies at 42-51; sequence PTAPDLHLGH. Residues 226–230 carry the 'KMSKS' region motif; that stretch reads KMSKS. Lysine 229 contacts ATP. Residues 339-399 form the S4 RNA-binding domain; it reads FSISYILRRA…GKKKIAQIFV (61 aa).

The protein belongs to the class-I aminoacyl-tRNA synthetase family. TyrS type 2 subfamily. Homodimer.

The protein resides in the cytoplasm. It catalyses the reaction tRNA(Tyr) + L-tyrosine + ATP = L-tyrosyl-tRNA(Tyr) + AMP + diphosphate + H(+). In terms of biological role, catalyzes the attachment of tyrosine to tRNA(Tyr) in a two-step reaction: tyrosine is first activated by ATP to form Tyr-AMP and then transferred to the acceptor end of tRNA(Tyr). The sequence is that of Tyrosine--tRNA ligase from Hahella chejuensis (strain KCTC 2396).